The primary structure comprises 365 residues: tRNA(Met) cytidine acetate ligase (365 aa).

ATP is bound by residues 7 to 20 (IAEFNPFHNGHKYL), G96, N152, and R175.

It belongs to the TmcAL family.

The protein resides in the cytoplasm. The catalysed reaction is cytidine(34) in elongator tRNA(Met) + acetate + ATP = N(4)-acetylcytidine(34) in elongator tRNA(Met) + AMP + diphosphate. In terms of biological role, catalyzes the formation of N(4)-acetylcytidine (ac(4)C) at the wobble position of elongator tRNA(Met), using acetate and ATP as substrates. First activates an acetate ion to form acetyladenylate (Ac-AMP) and then transfers the acetyl group to tRNA to form ac(4)C34. The protein is tRNA(Met) cytidine acetate ligase of Streptococcus pneumoniae (strain P1031).